The chain runs to 719 residues: Polyribonucleotide nucleotidyltransferase (719 aa).

Mg(2+)-binding residues include Asp-507 and Asp-513. In terms of domain architecture, KH spans 573 to 633; that stretch reads PKLELFSVDP…EQIKAAKDYI (61 aa). Positions 658–719 constitute an S1 motif domain; that stretch reads GQEFQGIVKK…NGKISVDLCE (62 aa).

Belongs to the polyribonucleotide nucleotidyltransferase family. Mg(2+) is required as a cofactor.

It localises to the cytoplasm. It carries out the reaction RNA(n+1) + phosphate = RNA(n) + a ribonucleoside 5'-diphosphate. In terms of biological role, involved in mRNA degradation. Catalyzes the phosphorolysis of single-stranded polyribonucleotides processively in the 3'- to 5'-direction. The chain is Polyribonucleotide nucleotidyltransferase from Campylobacter jejuni subsp. jejuni serotype O:23/36 (strain 81-176).